The primary structure comprises 158 residues: NADH-quinone oxidoreductase subunit B 2 (158 aa).

Positions 37, 38, 102, and 132 each coordinate [4Fe-4S] cluster.

Belongs to the complex I 20 kDa subunit family. NDH-1 is composed of 14 different subunits. Subunits NuoB, C, D, E, F, and G constitute the peripheral sector of the complex. Requires [4Fe-4S] cluster as cofactor.

The protein localises to the cell inner membrane. The catalysed reaction is a quinone + NADH + 5 H(+)(in) = a quinol + NAD(+) + 4 H(+)(out). In terms of biological role, NDH-1 shuttles electrons from NADH, via FMN and iron-sulfur (Fe-S) centers, to quinones in the respiratory chain. Couples the redox reaction to proton translocation (for every two electrons transferred, four hydrogen ions are translocated across the cytoplasmic membrane), and thus conserves the redox energy in a proton gradient. The chain is NADH-quinone oxidoreductase subunit B 2 from Nitrosospira multiformis (strain ATCC 25196 / NCIMB 11849 / C 71).